Consider the following 405-residue polypeptide: Pre-mRNA-splicing factor cwc-24 (405 aa).

2 disordered regions span residues 1-114 (MADT…NTIY) and 162-184 (TKKK…DGTY). Residues 15–29 (EPTTATPTAPIAPVA) show a composition bias toward low complexity. Residues 31 to 46 (FKKRGAKGKANLRKRP) are compositionally biased toward basic residues. Acidic residues predominate over residues 56–70 (SDDDSSDFESSEDEA). Residues 74–83 (RIKRRKKNHH) are compositionally biased toward basic residues. The C3H1-type zinc finger occupies 221-249 (DMAPDVCKDYKQTGFCGFGDNCKFLHARE). The segment at 310-349 (CIICRGPYSNSPVVTRCGHYFCEACALKRYRKDPSCAACG) adopts an RING-type zinc-finger fold. Positions 370–386 (KARAERLRREARERGEE) are enriched in basic and acidic residues. A disordered region spans residues 370 to 405 (KARAERLRREARERGEEVSEEEDEGEDEGEGAEGSD). The span at 387 to 405 (VSEEEDEGEDEGEGAEGSD) shows a compositional bias: acidic residues.

This sequence belongs to the CWC24 family. Associated with the spliceosome.

The protein resides in the nucleus. Functionally, involved in pre-mRNA splicing. In Neurospora crassa (strain ATCC 24698 / 74-OR23-1A / CBS 708.71 / DSM 1257 / FGSC 987), this protein is Pre-mRNA-splicing factor cwc-24 (cwc-24).